Here is a 145-residue protein sequence, read N- to C-terminus: Large ribosomal subunit protein bL19 (145 aa).

This sequence belongs to the bacterial ribosomal protein bL19 family.

Functionally, this protein is located at the 30S-50S ribosomal subunit interface and may play a role in the structure and function of the aminoacyl-tRNA binding site. The protein is Large ribosomal subunit protein bL19 of Brachyspira hyodysenteriae (strain ATCC 49526 / WA1).